Consider the following 64-residue polypeptide: MKASELLQKDQAALNKELSDLLKAQFGLRMQLATQQLTNTSQLKKVRRDIARVRTVLTQKANQK.

This sequence belongs to the universal ribosomal protein uL29 family.

In Burkholderia mallei (strain NCTC 10247), this protein is Large ribosomal subunit protein uL29.